Reading from the N-terminus, the 204-residue chain is ATP phosphoribosyltransferase (204 aa).

It belongs to the ATP phosphoribosyltransferase family. Short subfamily. Heteromultimer composed of HisG and HisZ subunits.

Its subcellular location is the cytoplasm. It catalyses the reaction 1-(5-phospho-beta-D-ribosyl)-ATP + diphosphate = 5-phospho-alpha-D-ribose 1-diphosphate + ATP. It participates in amino-acid biosynthesis; L-histidine biosynthesis; L-histidine from 5-phospho-alpha-D-ribose 1-diphosphate: step 1/9. In terms of biological role, catalyzes the condensation of ATP and 5-phosphoribose 1-diphosphate to form N'-(5'-phosphoribosyl)-ATP (PR-ATP). Has a crucial role in the pathway because the rate of histidine biosynthesis seems to be controlled primarily by regulation of HisG enzymatic activity. This is ATP phosphoribosyltransferase from Staphylococcus aureus (strain Mu3 / ATCC 700698).